A 199-amino-acid polypeptide reads, in one-letter code: Thymidylate kinase (199 aa).

7–14 (GTEGVGKT) serves as a coordination point for ATP.

The protein belongs to the thymidylate kinase family.

It catalyses the reaction dTMP + ATP = dTDP + ADP. In terms of biological role, phosphorylation of dTMP to form dTDP in both de novo and salvage pathways of dTTP synthesis. In Acinetobacter baumannii (strain AB307-0294), this protein is Thymidylate kinase.